The sequence spans 483 residues: V-type proton ATPase subunit H (483 aa).

Ser483 bears the Phosphoserine mark.

Belongs to the V-ATPase H subunit family. As to quaternary structure, V-ATPase is a heteromultimeric enzyme made up of two complexes: the ATP-hydrolytic V1 complex and the proton translocation V0 complex. The V1 complex consists of three catalytic AB heterodimers that form a heterohexamer, three peripheral stalks each consisting of EG heterodimers, one central rotor including subunits D and F, and the regulatory subunits C and H. The proton translocation complex V0 consists of the proton transport subunit a, a ring of proteolipid subunits c9c'', rotary subunit d, subunits e and f, and the accessory subunits ATP6AP1/Ac45 and ATP6AP2/PRR. Interacts with AP2M1.

It is found in the cytoplasmic vesicle. The protein resides in the clathrin-coated vesicle membrane. In terms of biological role, subunit of the V1 complex of vacuolar(H+)-ATPase (V-ATPase), a multisubunit enzyme composed of a peripheral complex (V1) that hydrolyzes ATP and a membrane integral complex (V0) that translocates protons. V-ATPase is responsible for acidifying and maintaining the pH of intracellular compartments and in some cell types, is targeted to the plasma membrane, where it is responsible for acidifying the extracellular environment. Subunit H is essential for V-ATPase activity, but not for the assembly of the complex. Involved in the endocytosis mediated by clathrin-coated pits, required for the formation of endosomes. The polypeptide is V-type proton ATPase subunit H (ATP6V1H) (Sus scrofa (Pig)).